A 187-amino-acid polypeptide reads, in one-letter code: Acireductone dioxygenase 4 (187 aa).

Ala-2 is subject to N-acetylalanine. The Fe(2+) site is built by His-89, His-91, Glu-95, and His-134. Residues His-89, His-91, Glu-95, and His-134 each coordinate Ni(2+).

Belongs to the acireductone dioxygenase (ARD) family. Requires Fe(2+) as cofactor. The cofactor is Ni(2+).

The protein localises to the cytoplasm. Its subcellular location is the nucleus. It carries out the reaction 1,2-dihydroxy-5-(methylsulfanyl)pent-1-en-3-one + O2 = 4-methylsulfanyl-2-oxobutanoate + formate + 2 H(+). It catalyses the reaction 1,2-dihydroxy-5-(methylsulfanyl)pent-1-en-3-one + O2 = 3-(methylsulfanyl)propanoate + CO + formate + 2 H(+). It functions in the pathway amino-acid biosynthesis; L-methionine biosynthesis via salvage pathway; L-methionine from S-methyl-5-thio-alpha-D-ribose 1-phosphate: step 5/6. Functionally, catalyzes 2 different reactions between oxygen and the acireductone 1,2-dihydroxy-3-keto-5-methylthiopentene (DHK-MTPene) depending upon the metal bound in the active site. Fe-containing acireductone dioxygenase (Fe-ARD) produces formate and 2-keto-4-methylthiobutyrate (KMTB), the alpha-ketoacid precursor of methionine in the methionine recycle pathway. Ni-containing acireductone dioxygenase (Ni-ARD) produces methylthiopropionate, carbon monoxide and formate, and does not lie on the methionine recycle pathway. The chain is Acireductone dioxygenase 4 (ARD4) from Arabidopsis thaliana (Mouse-ear cress).